A 442-amino-acid chain; its full sequence is Inner membrane protein PPF-1, chloroplastic (442 aa).

Over 1-108 the chain is Lumenal; the sequence is MAKTLISSPS…EFVLKVLKDG (108 aa). A helical membrane pass occupies residues 109 to 129; it reads LSSVHVPYSYGFAIILLTVIV. The Stromal segment spans residues 130 to 183; the sequence is KAATLPLTKQQVESTLAMQNLQPKIKAIQERYAGNQERIQLETSRLYTQAGVNP. The helical transmembrane segment at 184–204 threads the bilayer; that stretch reads LAGCLPTLATIPVWIGLYQAL. The Lumenal segment spans residues 205-296; it reads SNVANEGLLT…QKNTLLIFKF (92 aa). A helical transmembrane segment spans residues 297–317; it reads LPLMIGYFSLSVPSGLTIYWF. The Stromal segment spans residues 318-442; that stretch reads TNNVLSTAQQ…SKRSKRKPVA (125 aa). 2 disordered regions span residues 350 to 371 and 390 to 442; these read AGQA…RQLK and PLAS…KPVA. Basic and acidic residues predominate over residues 358–371; that stretch reads SKPEKGGERFRQLK. A compositionally biased stretch (polar residues) spans 414-427; that stretch reads ESNTSKVSQEVQSF. A compositionally biased stretch (basic residues) spans 431–442; it reads RRSKRSKRKPVA.

Belongs to the OXA1/ALB3/YidC (TC 2.A.9.2) family. In terms of tissue distribution, highly expressed in apical buds. Low levels of expression in leaves. Not expressed in roots, and stems.

The protein resides in the plastid. Its subcellular location is the chloroplast thylakoid membrane. Functionally, may be required for the insertion of some integral membrane proteins into the chloroplast thylakoid membrane. May play a role in inhibiting senescence. This is Inner membrane protein PPF-1, chloroplastic (PPF-1) from Pisum sativum (Garden pea).